A 382-amino-acid polypeptide reads, in one-letter code: Anhydro-N-acetylmuramic acid kinase (382 aa).

22–29 contributes to the ATP binding site; sequence GTSMDGVD.

Belongs to the anhydro-N-acetylmuramic acid kinase family.

It carries out the reaction 1,6-anhydro-N-acetyl-beta-muramate + ATP + H2O = N-acetyl-D-muramate 6-phosphate + ADP + H(+). Its pathway is amino-sugar metabolism; 1,6-anhydro-N-acetylmuramate degradation. It functions in the pathway cell wall biogenesis; peptidoglycan recycling. In terms of biological role, catalyzes the specific phosphorylation of 1,6-anhydro-N-acetylmuramic acid (anhMurNAc) with the simultaneous cleavage of the 1,6-anhydro ring, generating MurNAc-6-P. Is required for the utilization of anhMurNAc either imported from the medium or derived from its own cell wall murein, and thus plays a role in cell wall recycling. This Burkholderia orbicola (strain AU 1054) protein is Anhydro-N-acetylmuramic acid kinase.